We begin with the raw amino-acid sequence, 753 residues long: Photosystem I P700 chlorophyll a apoprotein A1 (753 aa).

8 consecutive transmembrane segments (helical) span residues 73–96 (IFSA…FHAA), 159–182 (LYSA…YHYH), 198–222 (MTHH…HVSL), 294–312 (IAHH…GHMY), 349–372 (WHAQ…HHMY), 388–414 (LNLF…IFMV), 436–458 (TIIS…LYIH), and 534–552 (FMIH…LILI). The [4Fe-4S] cluster site is built by C576 and C585. Helical transmembrane passes span 592-613 (HIFL…HFFW) and 667-689 (LSAY…MFLF). Position 678 (H678) interacts with chlorophyll a'. The chlorophyll a site is built by M686 and Y694. Residue W695 coordinates phylloquinone. Residues 727-747 (AVGLGHYLLGGIVTSWSFYLA) traverse the membrane as a helical segment.

Belongs to the PsaA/PsaB family. As to quaternary structure, the PsaA/B heterodimer binds the P700 chlorophyll special pair and subsequent electron acceptors. PSI consists of a core antenna complex that captures photons, and an electron transfer chain that converts photonic excitation into a charge separation. The cyanobacterial PSI reaction center is composed of one copy each of PsaA,B,C,D,E,F,I,J,K,L,M and X, and forms trimeric complexes. PSI electron transfer chain: 5 chlorophyll a, 1 chlorophyll a', 2 phylloquinones and 3 4Fe-4S clusters. PSI core antenna: 90 chlorophyll a, 22 carotenoids, 3 phospholipids and 1 galactolipid. P700 is a chlorophyll a/chlorophyll a' dimer, A0 is one or more chlorophyll a, A1 is one or both phylloquinones and FX is a shared 4Fe-4S iron-sulfur center. is required as a cofactor.

It is found in the cellular thylakoid membrane. It catalyses the reaction reduced [plastocyanin] + hnu + oxidized [2Fe-2S]-[ferredoxin] = oxidized [plastocyanin] + reduced [2Fe-2S]-[ferredoxin]. PsaA and PsaB bind P700, the primary electron donor of photosystem I (PSI), as well as the electron acceptors A0, A1 and FX. PSI is a plastocyanin/cytochrome c6-ferredoxin oxidoreductase, converting photonic excitation into a charge separation, which transfers an electron from the donor P700 chlorophyll pair to the spectroscopically characterized acceptors A0, A1, FX, FA and FB in turn. Oxidized P700 is reduced on the lumenal side of the thylakoid membrane by plastocyanin or cytochrome c6. This chain is Photosystem I P700 chlorophyll a apoprotein A1, found in Acaryochloris marina (strain MBIC 11017).